Consider the following 1189-residue polypeptide: Pesticidal crystal protein Cry1Ca (1189 aa).

It belongs to the delta endotoxin family.

Promotes colloidosmotic lysis by binding to the midgut epithelial cells of many lepidopteran larvae including Spodoptera species. This chain is Pesticidal crystal protein Cry1Ca (cry1Ca), found in Bacillus thuringiensis subsp. entomocidus.